Reading from the N-terminus, the 309-residue chain is Olfactory receptor 10V1 (309 aa).

The Extracellular portion of the chain corresponds to 1–25; sequence MEGINKTAKMQFFFRPFSPDPEVQM. A glycan (N-linked (GlcNAc...) asparagine) is linked at asparagine 5. A helical membrane pass occupies residues 26–46; sequence LIFVVFLMMYLTSLGGNATIA. The Cytoplasmic portion of the chain corresponds to 47-54; the sequence is VIVQINHS. Residues 55 to 75 form a helical membrane-spanning segment; it reads LHTPMYFFLANLAVLEIFYTS. The Extracellular portion of the chain corresponds to 76–100; that stretch reads SITPLALANLLSMGKTPVSITGCGT. Cysteine 98 and cysteine 190 are joined by a disulfide. Residues 101-121 form a helical membrane-spanning segment; sequence QMFFFVFLGGADCVLLVVMAY. At 122–140 the chain is on the cytoplasmic side; it reads DQFIAICHPLRYRLIMSWS. Residues 141-161 traverse the membrane as a helical segment; it reads LCVELLVGSLVLGFLLSLPLT. Topologically, residues 162–198 are extracellular; the sequence is ILIFHLPFCHNDEIYHFYCDMPAVMRLACADTRVHKT. Residues 199 to 218 traverse the membrane as a helical segment; the sequence is ALYIISFIVLSIPLSLISIS. Residues 219 to 238 are Cytoplasmic-facing; it reads YVFIVVAILRIRSAEGRQQA. A helical transmembrane segment spans residues 239 to 259; it reads YSTCSSHILVVLLQYGCTSFI. Over 260–272 the chain is Extracellular; it reads YLSPSSSYSPEMG. The chain crosses the membrane as a helical span at residues 273–293; sequence RVVSVAYTFITPILNPLIYSL. The Cytoplasmic portion of the chain corresponds to 294–309; it reads RNKELKDALRKALRKF.

This sequence belongs to the G-protein coupled receptor 1 family.

The protein localises to the cell membrane. Functionally, odorant receptor. This is Olfactory receptor 10V1 (OR10V1) from Homo sapiens (Human).